We begin with the raw amino-acid sequence, 129 residues long: Succinate dehydrogenase assembly factor 3, mitochondrial (129 aa).

The N-terminal 21 residues, 1-21 (MQVNHLLRQAVKQTTRAGRLG), are a transit peptide targeting the mitochondrion.

It belongs to the complex I LYR family. SDHAF3 subfamily. As to quaternary structure, interacts with the iron-sulfur protein subunit within the SDH catalytic dimer.

The protein localises to the mitochondrion matrix. Functionally, plays an essential role in the assembly of succinate dehydrogenase (SDH), an enzyme complex (also referred to as respiratory complex II) that is a component of both the tricarboxylic acid (TCA) cycle and the mitochondrial electron transport chain, and which couples the oxidation of succinate to fumarate with the reduction of ubiquinone (coenzyme Q) to ubiquinol. Promotes maturation of the iron-sulfur protein subunit of the SDH catalytic dimer, protecting it from the deleterious effects of oxidants. May act together with SDHAF1. In Kluyveromyces lactis (strain ATCC 8585 / CBS 2359 / DSM 70799 / NBRC 1267 / NRRL Y-1140 / WM37) (Yeast), this protein is Succinate dehydrogenase assembly factor 3, mitochondrial.